The sequence spans 121 residues: Large ribosomal subunit protein uL18 (121 aa).

Belongs to the universal ribosomal protein uL18 family. As to quaternary structure, part of the 50S ribosomal subunit; part of the 5S rRNA/L5/L18/L25 subcomplex. Contacts the 5S and 23S rRNAs.

This is one of the proteins that bind and probably mediate the attachment of the 5S RNA into the large ribosomal subunit, where it forms part of the central protuberance. This is Large ribosomal subunit protein uL18 from Acidovorax ebreus (strain TPSY) (Diaphorobacter sp. (strain TPSY)).